The following is a 95-amino-acid chain: Co-chaperonin GroES (95 aa).

This sequence belongs to the GroES chaperonin family. Heptamer of 7 subunits arranged in a ring. Interacts with the chaperonin GroEL.

It is found in the cytoplasm. Functionally, together with the chaperonin GroEL, plays an essential role in assisting protein folding. The GroEL-GroES system forms a nano-cage that allows encapsulation of the non-native substrate proteins and provides a physical environment optimized to promote and accelerate protein folding. GroES binds to the apical surface of the GroEL ring, thereby capping the opening of the GroEL channel. This chain is Co-chaperonin GroES, found in Dichelobacter nodosus (strain VCS1703A).